The following is a 797-amino-acid chain: Ubiquitin carboxyl-terminal hydrolase 14 (797 aa).

The segment at 156–266 (LISEHALTLQ…EHLAHFGIDF (111 aa)) adopts a UBP-type; degenerate zinc-finger fold. Positions 180, 183, 200, and 213 each coordinate Zn(2+). Positions 308–796 (TGLVNLGNSC…MGYVYFFQRL (489 aa)) constitute a USP domain. Cys-317 functions as the Nucleophile in the catalytic mechanism. 2 UBA domains span residues 613 to 654 (VANE…LLSH) and 670 to 710 (DIDQ…VFNN). His-758 functions as the Proton acceptor in the catalytic mechanism.

Belongs to the peptidase C19 family. As to expression, constitutively and ubiquitously expressed (at protein level).

It carries out the reaction Thiol-dependent hydrolysis of ester, thioester, amide, peptide and isopeptide bonds formed by the C-terminal Gly of ubiquitin (a 76-residue protein attached to proteins as an intracellular targeting signal).. Functionally, recognizes and hydrolyzes the peptide bond at the C-terminal Gly of ubiquitin. Involved in the processing of poly-ubiquitin precursors as well as that of ubiquitinated proteins. Involved in seed and embryo development. This is Ubiquitin carboxyl-terminal hydrolase 14 (UBP14) from Arabidopsis thaliana (Mouse-ear cress).